The chain runs to 145 residues: Large ribosomal subunit protein uL15 (145 aa).

Over residues 1-30 (MAHSLRKTRKLRGHVSHGHGRIGKHRKHPG) the composition is skewed to basic residues. The tract at residues 1–48 (MAHSLRKTRKLRGHVSHGHGRIGKHRKHPGGRGNAGGQHHHRINRDKY) is disordered.

It belongs to the universal ribosomal protein uL15 family. In terms of assembly, component of the large ribosomal subunit.

The protein localises to the cytoplasm. Its subcellular location is the cytosol. The protein resides in the rough endoplasmic reticulum. In terms of biological role, component of the large ribosomal subunit. This chain is Large ribosomal subunit protein uL15 (rpl-27a), found in Oscheius tipulae.